The following is a 442-amino-acid chain: Mannosylglycerate hydrolase (442 aa).

Residues Tyr-38, 42-45 (WSWD), Tyr-90, Gln-116, and Gly-176 contribute to the substrate site. Asp-178 functions as the Proton donor in the catalytic mechanism. Substrate contacts are provided by residues Arg-213 and 369–370 (YW). Glu-413 (proton acceptor) is an active-site residue.

It belongs to the glycosyl hydrolase 63 family. As to quaternary structure, homodimer in solution.

The enzyme catalyses (2R)-2-O-(alpha-D-mannosyl)-glycerate + H2O = D-mannose + (R)-glycerate. The catalysed reaction is (2R)-2-O-(alpha-D-glucopyranosyl)-glycerate + H2O = (R)-glycerate + D-glucose. With respect to regulation, activity is not stimulated by divalent cations and not affected in the presence of EDTA. Functionally, hydrolase that catalyzes the hydrolysis of mannosylglycerate (MG), a solute produced in response to osmotic stress in thermophiles, into mannose and glycerate. Can also hydrolyze glucosylglycerate (GG) to glucose and glycerate, with similar catalytic efficiency. Is highly specific for MG and GG, and cannot use mannosylglyceramide (MGA), glucosylglycerol, mannosylglucosylglycerate (MGG), glucosylglucosylglycerate (GGG) or trehalose as substrates. The polypeptide is Mannosylglycerate hydrolase (Rubrobacter radiotolerans (Arthrobacter radiotolerans)).